The chain runs to 185 residues: Elongation factor P (185 aa).

This sequence belongs to the elongation factor P family.

The protein resides in the cytoplasm. It participates in protein biosynthesis; polypeptide chain elongation. Its function is as follows. Involved in peptide bond synthesis. Stimulates efficient translation and peptide-bond synthesis on native or reconstituted 70S ribosomes in vitro. Probably functions indirectly by altering the affinity of the ribosome for aminoacyl-tRNA, thus increasing their reactivity as acceptors for peptidyl transferase. The protein is Elongation factor P of Bordetella avium (strain 197N).